We begin with the raw amino-acid sequence, 331 residues long: Tryptophan--tRNA ligase (331 aa).

ATP contacts are provided by residues 10-12 (QPS) and 18-19 (GN). The short motif at 11–19 (PSGQLTLGN) is the 'HIGH' region element. Asp133 contributes to the L-tryptophan binding site. Residues 145-147 (GED), Val184, and 193-197 (KMSKS) contribute to the ATP site. The 'KMSKS' region motif lies at 193-197 (KMSKS).

It belongs to the class-I aminoacyl-tRNA synthetase family. In terms of assembly, homodimer.

Its subcellular location is the cytoplasm. It carries out the reaction tRNA(Trp) + L-tryptophan + ATP = L-tryptophyl-tRNA(Trp) + AMP + diphosphate + H(+). In terms of biological role, catalyzes the attachment of tryptophan to tRNA(Trp). In Listeria innocua serovar 6a (strain ATCC BAA-680 / CLIP 11262), this protein is Tryptophan--tRNA ligase.